We begin with the raw amino-acid sequence, 509 residues long: Putative 6-phosphofructo-2-kinase/fructose-2,6-bisphosphatase YLR345W (509 aa).

S6 carries the post-translational modification Phosphoserine. The interval S6 to K291 is 6-phosphofructo-2-kinase. G90–L98 contacts ATP. The active-site Proton donor/acceptor is D173. Residue N212–L217 coordinates ATP. R237 contacts beta-D-fructose 6-phosphate. The interval G292–L466 is fructose-2,6-bisphosphatase. R298 contacts beta-D-fructose 2,6-bisphosphate. Y415–S418 contacts ATP. Beta-D-fructose 2,6-bisphosphate contacts are provided by Y433 and R464. E460–R464 is an ATP binding site.

The protein in the C-terminal section; belongs to the phosphoglycerate mutase family. In terms of assembly, homodimer.

Its subcellular location is the cytoplasm. The catalysed reaction is beta-D-fructose 2,6-bisphosphate + H2O = beta-D-fructose 6-phosphate + phosphate. It carries out the reaction beta-D-fructose 6-phosphate + ATP = beta-D-fructose 2,6-bisphosphate + ADP + H(+). In terms of biological role, synthesis and degradation of fructose 2,6-bisphosphate. This is Putative 6-phosphofructo-2-kinase/fructose-2,6-bisphosphatase YLR345W from Saccharomyces cerevisiae (strain ATCC 204508 / S288c) (Baker's yeast).